Consider the following 505-residue polypeptide: Tyrosine-protein kinase isoform SRK1 (505 aa).

Polar residues-rich tracts occupy residues 1–10 (MGSCCSSQDG) and 18–31 (AGSTVDSHELSQSV). Positions 1–53 (MGSCCSSQDGDGNGKATAGSTVDSHELSQSVKGKIKQPEPKPKPPPQVPPAQD) are disordered. The SH3 domain occupies 54–116 (VKYPIYVGKY…PSNYVAEYKS (63 aa)). The 93-residue stretch at 122–214 (WFLGKIKRVE…GLCCKLLYPC (93 aa)) folds into the SH2 domain. One can recognise a Protein kinase domain in the interval 240–493 (IKLLRRLGAG…TLQWQLEEFF (254 aa)). Residues 246-254 (LGAGQFGEV) and lysine 268 each bind ATP. Residue aspartate 359 is the Proton acceptor of the active site.

This sequence belongs to the protein kinase superfamily. Tyr protein kinase family. SRC subfamily.

It localises to the cytoplasm. It carries out the reaction L-tyrosyl-[protein] + ATP = O-phospho-L-tyrosyl-[protein] + ADP + H(+). The polypeptide is Tyrosine-protein kinase isoform SRK1 (SRK1) (Spongilla lacustris (Freshwater sponge)).